The chain runs to 294 residues: Lipoyl synthase (294 aa).

7 residues coordinate [4Fe-4S] cluster: cysteine 35, cysteine 40, cysteine 46, cysteine 61, cysteine 65, cysteine 68, and serine 275. One can recognise a Radical SAM core domain in the interval 46–264 (CWGGGTATVM…RDQGLALGFR (219 aa)).

Belongs to the radical SAM superfamily. Lipoyl synthase family. [4Fe-4S] cluster serves as cofactor.

The protein resides in the cytoplasm. It catalyses the reaction [[Fe-S] cluster scaffold protein carrying a second [4Fe-4S](2+) cluster] + N(6)-octanoyl-L-lysyl-[protein] + 2 oxidized [2Fe-2S]-[ferredoxin] + 2 S-adenosyl-L-methionine + 4 H(+) = [[Fe-S] cluster scaffold protein] + N(6)-[(R)-dihydrolipoyl]-L-lysyl-[protein] + 4 Fe(3+) + 2 hydrogen sulfide + 2 5'-deoxyadenosine + 2 L-methionine + 2 reduced [2Fe-2S]-[ferredoxin]. It functions in the pathway protein modification; protein lipoylation via endogenous pathway; protein N(6)-(lipoyl)lysine from octanoyl-[acyl-carrier-protein]: step 2/2. In terms of biological role, catalyzes the radical-mediated insertion of two sulfur atoms into the C-6 and C-8 positions of the octanoyl moiety bound to the lipoyl domains of lipoate-dependent enzymes, thereby converting the octanoylated domains into lipoylated derivatives. This Anaeromyxobacter dehalogenans (strain 2CP-C) protein is Lipoyl synthase.